The sequence spans 228 residues: Probable methylthioribulose-1-phosphate dehydratase (228 aa).

Cys-87 is a binding site for substrate. 2 residues coordinate Zn(2+): His-105 and His-107. Catalysis depends on Glu-129, which acts as the Proton donor/acceptor. A Zn(2+)-binding site is contributed by His-185.

Belongs to the aldolase class II family. MtnB subfamily. Requires Zn(2+) as cofactor.

The protein localises to the cytoplasm. The catalysed reaction is 5-(methylsulfanyl)-D-ribulose 1-phosphate = 5-methylsulfanyl-2,3-dioxopentyl phosphate + H2O. It functions in the pathway amino-acid biosynthesis; L-methionine biosynthesis via salvage pathway; L-methionine from S-methyl-5-thio-alpha-D-ribose 1-phosphate: step 2/6. Functionally, catalyzes the dehydration of methylthioribulose-1-phosphate (MTRu-1-P) into 2,3-diketo-5-methylthiopentyl-1-phosphate (DK-MTP-1-P). This chain is Probable methylthioribulose-1-phosphate dehydratase, found in Drosophila willistoni (Fruit fly).